The sequence spans 760 residues: BMP/retinoic acid-inducible neural-specific protein 1 (760 aa).

An N-terminal signal peptide occupies residues 1-16; sequence MNWRFVELLYFLFVWG. The MACPF domain maps to 68 to 251; sequence RYKIYREFAR…FVQSALSYIM (184 aa). Asparagine 156, asparagine 433, asparagine 443, asparagine 553, asparagine 599, asparagine 630, and asparagine 676 each carry an N-linked (GlcNAc...) asparagine glycan.

The protein belongs to the BRINP family.

Its subcellular location is the cytoplasm. In terms of biological role, plays a role in neurogenesis and brain development. May suppress cell cycle progression in postmitotic neurons by inhibiting G1/S transition. This chain is BMP/retinoic acid-inducible neural-specific protein 1 (Brinp1), found in Rattus norvegicus (Rat).